We begin with the raw amino-acid sequence, 406 residues long: MDGWRRMPRWGLLLLLWGSCTFGLPTDTTTFKRIFLKRMPSIRESLKERGVDMARLGPEWSQPMKRLTLGNTTSSVILTNYMDTQYYGEIGIGTPPQTFKVVFDTGSSNVWVPSSKCSRLYTACVYHKLFDASDSSSYKHNGTELTLRYSTGTVSGFLSQDIITVGGITVTQMFGEVTEMPALPFMLAEFDGVVGMGFIEQAIGRVTPIFDNIISQGVLKEDVFSFYYNRDSENSQSLGGQIVLGGSDPQHYEGNFHYINLIKTGVWQIQMKGVSVGSSTLLCEDGCLALVDTGASYISGSTSSIEKLMEALGAKKRLFDYVVKCNEGPTLPDISFHLGGKEYTLTSADYVFQESYSSKKLCTLAIHAMDIPPPTGPTWALGATFIRKFYTEFDRRNNRIGFALAR.

Positions 1–23 (MDGWRRMPRWGLLLLLWGSCTFG) are cleaved as a signal peptide. Positions 24–66 (LPTDTTTFKRIFLKRMPSIRESLKERGVDMARLGPEWSQPMKR) are cleaved as a propeptide — activation peptide. A glycan (N-linked (GlcNAc...) asparagine) is linked at Asn71. In terms of domain architecture, Peptidase A1 spans 86-403 (YYGEIGIGTP…DRRNNRIGFA (318 aa)). Asp104 is a catalytic residue. Cys117 and Cys124 are oxidised to a cystine. An N-linked (GlcNAc...) asparagine glycan is attached at Asn141. A disulfide bridge connects residues Cys283 and Cys287. Asp292 is an active-site residue. Cys325 and Cys362 are oxidised to a cystine.

The protein belongs to the peptidase A1 family. Interacts with ATP6AP2.

The protein localises to the secreted. It is found in the membrane. It catalyses the reaction Cleavage of Leu-|-Xaa bond in angiotensinogen to generate angiotensin I.. With respect to regulation, interaction with ATP6AP2 results in a 5-fold increased efficiency in angiotensinogen processing. Functionally, renin is a highly specific endopeptidase, whose only known function is to generate angiotensin I from angiotensinogen in the plasma, initiating a cascade of reactions that produce an elevation of blood pressure and increased sodium retention by the kidney. This is Renin (REN) from Homo sapiens (Human).